Consider the following 468-residue polypeptide: Chromosomal replication initiator protein DnaA (468 aa).

A domain I, interacts with DnaA modulators region spans residues 1–90; the sequence is MTQEKWGLLC…NSPMRPARAA (90 aa). The domain II stretch occupies residues 91 to 126; sequence RPAAAAAAAAAAVEAPQVSAPRATDTSDVLDGLQAA. The interval 127-348 is domain III, AAA+ region; that stretch reads PLDPRFTFDS…GALTRLFAFA (222 aa). The ATP site is built by G171, G173, K174, and T175. The domain IV, binds dsDNA stretch occupies residues 349–468; sequence SLVGREIDME…VEMLRRALEA (120 aa).

It belongs to the DnaA family. In terms of assembly, oligomerizes as a right-handed, spiral filament on DNA at oriC.

It is found in the cytoplasm. Plays an essential role in the initiation and regulation of chromosomal replication. ATP-DnaA binds to the origin of replication (oriC) to initiate formation of the DNA replication initiation complex once per cell cycle. Binds the DnaA box (a 9 base pair repeat at the origin) and separates the double-stranded (ds)DNA. Forms a right-handed helical filament on oriC DNA; dsDNA binds to the exterior of the filament while single-stranded (ss)DNA is stabiized in the filament's interior. The ATP-DnaA-oriC complex binds and stabilizes one strand of the AT-rich DNA unwinding element (DUE), permitting loading of DNA polymerase. After initiation quickly degrades to an ADP-DnaA complex that is not apt for DNA replication. Binds acidic phospholipids. The protein is Chromosomal replication initiator protein DnaA of Ruegeria pomeroyi (strain ATCC 700808 / DSM 15171 / DSS-3) (Silicibacter pomeroyi).